Here is a 349-residue protein sequence, read N- to C-terminus: Alanine racemase (349 aa).

The active-site Proton acceptor; specific for D-alanine is the Lys-35. Lys-35 is modified (N6-(pyridoxal phosphate)lysine). A substrate-binding site is contributed by Arg-130. The active-site Proton acceptor; specific for L-alanine is the Tyr-244. Met-292 provides a ligand contact to substrate.

It belongs to the alanine racemase family. Pyridoxal 5'-phosphate serves as cofactor.

The catalysed reaction is L-alanine = D-alanine. It participates in amino-acid biosynthesis; D-alanine biosynthesis; D-alanine from L-alanine: step 1/1. Catalyzes the interconversion of L-alanine and D-alanine. May also act on other amino acids. In Cereibacter sphaeroides (strain ATCC 17025 / ATH 2.4.3) (Rhodobacter sphaeroides), this protein is Alanine racemase (alr).